Reading from the N-terminus, the 562-residue chain is Glutamate--tRNA ligase (562 aa).

Positions 101–111 (PEPNGYPHIGH) match the 'HIGH' region motif.

The protein belongs to the class-I aminoacyl-tRNA synthetase family. Glutamate--tRNA ligase type 2 subfamily.

It is found in the cytoplasm. It catalyses the reaction tRNA(Glu) + L-glutamate + ATP = L-glutamyl-tRNA(Glu) + AMP + diphosphate. Catalyzes the attachment of glutamate to tRNA(Glu) in a two-step reaction: glutamate is first activated by ATP to form Glu-AMP and then transferred to the acceptor end of tRNA(Glu). In Cenarchaeum symbiosum (strain A), this protein is Glutamate--tRNA ligase.